Reading from the N-terminus, the 181-residue chain is Type II secretion system protein H (181 aa).

Positions 1–5 (MRQRG) are cleaved as a propeptide — leader sequence. An N-methylphenylalanine modification is found at Phe6. Residues 6 to 29 (FTLLEIMLVVLLAGVAATLVMMAI) form a helical membrane-spanning segment.

The protein belongs to the GSP H family. Type II secretion is composed of four main components: the outer membrane complex, the inner membrane complex, the cytoplasmic secretion ATPase and the periplasm-spanning pseudopilus. Interacts with core component OutG. Cleaved by prepilin peptidase. Post-translationally, methylated by prepilin peptidase at the amino group of the N-terminal phenylalanine once the leader sequence is cleaved by prepilin peptidase.

The protein localises to the cell inner membrane. In terms of biological role, component of the type II secretion system required for the energy-dependent secretion of extracellular factors such as proteases and toxins from the periplasm. Part of the pseudopilus tip complex that is critical for the recognition and binding of secretion substrates. This chain is Type II secretion system protein H (outH), found in Dickeya chrysanthemi (Pectobacterium chrysanthemi).